A 223-amino-acid chain; its full sequence is N-acetylmuramate alpha-1-phosphate uridylyltransferase (223 aa).

UTP is bound by residues 11 to 13 (GER) and lysine 23. Asparagine 105 provides a ligand contact to substrate. Residue aspartate 107 coordinates Mg(2+). The substrate site is built by aspartate 140 and aspartate 205. Residue aspartate 205 coordinates Mg(2+).

The protein belongs to the nucleotidyltransferase MurU family. In terms of assembly, monomer. Requires Mg(2+) as cofactor.

The enzyme catalyses N-acetyl-alpha-D-muramate 1-phosphate + UDP + H(+) = UDP-N-acetyl-alpha-D-muramate + phosphate. The protein operates within cell wall biogenesis; peptidoglycan recycling. Is completely inhibited by EDTA in vitro. Its function is as follows. Catalyzes the formation of UDP-N-acetylmuramate (UDP-MurNAc), a crucial precursor of the bacterial peptidoglycan cell wall, from UTP and MurNAc-alpha-1P. Is involved in peptidoglycan recycling as part of a cell wall recycling pathway that bypasses de novo biosynthesis of the peptidoglycan precursor UDP-MurNAc. Plays a role in intrinsic resistance to fosfomycin, which targets the de novo synthesis of UDP-MurNAc. Is not able to use GlcNAc-alpha-1P and GalNAc-alpha-1P as substrates. Cannot accept other nucleotide triphosphates (ATP, CTP, TTP, or GTP) than UTP. In Pseudomonas putida (strain ATCC 47054 / DSM 6125 / CFBP 8728 / NCIMB 11950 / KT2440), this protein is N-acetylmuramate alpha-1-phosphate uridylyltransferase.